We begin with the raw amino-acid sequence, 172 residues long: 3-hydroxydecanoyl-[acyl-carrier-protein] dehydratase (172 aa).

Residue histidine 70 is part of the active site.

The protein belongs to the thioester dehydratase family. FabA subfamily. In terms of assembly, homodimer.

It is found in the cytoplasm. The catalysed reaction is a (3R)-hydroxyacyl-[ACP] = a (2E)-enoyl-[ACP] + H2O. It carries out the reaction (3R)-hydroxydecanoyl-[ACP] = (2E)-decenoyl-[ACP] + H2O. The enzyme catalyses (2E)-decenoyl-[ACP] = (3Z)-decenoyl-[ACP]. It functions in the pathway lipid metabolism; fatty acid biosynthesis. In terms of biological role, necessary for the introduction of cis unsaturation into fatty acids. Catalyzes the dehydration of (3R)-3-hydroxydecanoyl-ACP to E-(2)-decenoyl-ACP and then its isomerization to Z-(3)-decenoyl-ACP. Can catalyze the dehydratase reaction for beta-hydroxyacyl-ACPs with saturated chain lengths up to 16:0, being most active on intermediate chain length. This chain is 3-hydroxydecanoyl-[acyl-carrier-protein] dehydratase, found in Xylella fastidiosa (strain M23).